A 115-amino-acid polypeptide reads, in one-letter code: Immunoglobulin kappa variable 5-2 (115 aa).

The first 20 residues, 1–20, serve as a signal peptide directing secretion; sequence MGSQVHLLSFLLLWISDTRA. The tract at residues 21-43 is framework-1; the sequence is ETTLTQSPAFMSATPGDKVNISC. Residues 22-115 enclose the Ig-like domain; that stretch reads TTLTQSPAFM…YFCLQHDNFP (94 aa). The N-linked (GlcNAc...) asparagine glycan is linked to Asn-40. A Phosphoserine modification is found at Ser-42. The cysteines at positions 43 and 108 are disulfide-linked. The tract at residues 44–54 is complementarity-determining-1; that stretch reads KASQDIDDDMN. A framework-2 region spans residues 55–69; the sequence is WYQQKPGEAAIFIIQ. The complementarity-determining-2 stretch occupies residues 70–76; the sequence is EATTLVP. The interval 77 to 108 is framework-3; that stretch reads GIPPRFSGSGYGTDFTLTINNIESEDAAYYFC. The tract at residues 109-115 is complementarity-determining-3; it reads LQHDNFP.

As to quaternary structure, immunoglobulins are composed of two identical heavy chains and two identical light chains; disulfide-linked.

Its subcellular location is the secreted. The protein localises to the cell membrane. Its function is as follows. V region of the variable domain of immunoglobulin light chains that participates in the antigen recognition. Immunoglobulins, also known as antibodies, are membrane-bound or secreted glycoproteins produced by B lymphocytes. In the recognition phase of humoral immunity, the membrane-bound immunoglobulins serve as receptors which, upon binding of a specific antigen, trigger the clonal expansion and differentiation of B lymphocytes into immunoglobulins-secreting plasma cells. Secreted immunoglobulins mediate the effector phase of humoral immunity, which results in the elimination of bound antigens. The antigen binding site is formed by the variable domain of one heavy chain, together with that of its associated light chain. Thus, each immunoglobulin has two antigen binding sites with remarkable affinity for a particular antigen. The variable domains are assembled by a process called V-(D)-J rearrangement and can then be subjected to somatic hypermutations which, after exposure to antigen and selection, allow affinity maturation for a particular antigen. This is Immunoglobulin kappa variable 5-2 from Homo sapiens (Human).